The primary structure comprises 637 residues: 1-deoxy-D-xylulose-5-phosphate synthase (637 aa).

Thiamine diphosphate is bound by residues H88 and 129 to 131; that span reads GHS. Position 160 (D160) interacts with Mg(2+). Residues 161 to 162, N189, F293, and E370 contribute to the thiamine diphosphate site; that span reads GA. N189 lines the Mg(2+) pocket.

The protein belongs to the transketolase family. DXPS subfamily. As to quaternary structure, homodimer. Mg(2+) is required as a cofactor. It depends on thiamine diphosphate as a cofactor.

It catalyses the reaction D-glyceraldehyde 3-phosphate + pyruvate + H(+) = 1-deoxy-D-xylulose 5-phosphate + CO2. Its pathway is metabolic intermediate biosynthesis; 1-deoxy-D-xylulose 5-phosphate biosynthesis; 1-deoxy-D-xylulose 5-phosphate from D-glyceraldehyde 3-phosphate and pyruvate: step 1/1. In terms of biological role, catalyzes the acyloin condensation reaction between C atoms 2 and 3 of pyruvate and glyceraldehyde 3-phosphate to yield 1-deoxy-D-xylulose-5-phosphate (DXP). This is 1-deoxy-D-xylulose-5-phosphate synthase from Acinetobacter baumannii (strain AYE).